Here is a 446-residue protein sequence, read N- to C-terminus: Probable D-serine dehydratase (446 aa).

K116 is subject to N6-(pyridoxal phosphate)lysine.

Belongs to the serine/threonine dehydratase family. DsdA subfamily. Pyridoxal 5'-phosphate serves as cofactor.

It catalyses the reaction D-serine = pyruvate + NH4(+). This chain is Probable D-serine dehydratase, found in Bacillus cereus (strain 03BB102).